The following is an 81-amino-acid chain: Acyl carrier protein (81 aa).

The Carrier domain occupies 2-77; the sequence is ASIEERVVDI…EAIDFIEKEK (76 aa). Ser37 bears the O-(pantetheine 4'-phosphoryl)serine mark.

The protein belongs to the acyl carrier protein (ACP) family. 4'-phosphopantetheine is transferred from CoA to a specific serine of apo-ACP by AcpS. This modification is essential for activity because fatty acids are bound in thioester linkage to the sulfhydryl of the prosthetic group.

Its subcellular location is the cytoplasm. It participates in lipid metabolism; fatty acid biosynthesis. Carrier of the growing fatty acid chain in fatty acid biosynthesis. The chain is Acyl carrier protein from Rhodopirellula baltica (strain DSM 10527 / NCIMB 13988 / SH1).